We begin with the raw amino-acid sequence, 649 residues long: MKYSIPATPSGTTHAHVAIVGMGPRGTSALERLCASATDFLAPGARLTVHVVDPSPPGAGRVWRTAQSSELLMNTVTSQVTLYTDKSVVCSGPIREGPSLYEWATDAKLGLGPDEYPTRAQYGHYLEWVFREVVRNAPTGVEIEVHAARAVSLDDAPDGRQTLTLSTGRTLSGLSAVVLAQGHLPLVADAQLQQLTAYADQNGLRHITPSNPADVDLSSLKPGEPVFLRGLGLNFFDYMALLTTGRGGRFSRTPNGLRYHPSGREPRMYAGSRRGIPYQARGDNAKGAYGRHMPLIFTEEVIDGFRQRADSGNAPNFLKEIWPLVSKEVETVYYEALLRQHGFELGDFRDRFLATAHKSLEEAQVLTDFGITEENRWSWDRISRPYGERTFTAGAWRDWMLEYLREDAKEASLGNVNGPLKAALDVMRDLRNELRLIVDHAGLSGLSHRDHLDRWYTPLNAFLSIGPPRQRIEQMIALIEAGILDVLGPRPQARAEDGAWTVYSPEVPGLKVRVTTLIEARLPEPSLRHTADELLSHLLKTGQCRPHTVDGYETGGLDITLSPYRIIDSQGRAHERRFAVGVPTEGVHWVTAAGARPGVNSVTLSDTDAVARAALSAAVSGNTAVERQTEVKAWPNVEVSEVTVLEVGV.

It belongs to the nitrosuccinic acid synthase family. FAD serves as cofactor.

It catalyses the reaction L-aspartate + 3 NADPH + 3 O2 + 2 H(+) = 2-nitrobutanedioate + 3 NADP(+) + 4 H2O. Its pathway is mycotoxin biosynthesis. Its function is as follows. Nitrosuccinic acid synthase; part of the gene cluster that mediates the biosynthesis of the deadly neurotoxic nitroalkane 3-nitropropanoic acid (3-NPA) that acts as an antimetabolite of succinate and irreversibly inhibits succinate dehydrogenase and disrupts mitochondrial oxidative phosphorylation. NpaA catalyzes the iterative oxidation of L-aspartic acid to nitrosuccinic acid (2-nitrobutanedioate). Alternative amino acid substrates such as L-glutamate and D-aspartate are not accepted by npaA as a substrate, showing the strict substrate specificity toward L-aspartate. The nitrosuccinic acid decarboxylase npaB then facilitates decarboxylation of Nitrosuccinic acid to produce 3-NPA. This Aspergillus oryzae (strain ATCC 42149 / RIB 40) (Yellow koji mold) protein is Nitrosuccinic acid synthase npaA.